The primary structure comprises 314 residues: Malate dehydrogenase (314 aa).

NAD(+)-binding positions include 12–17 and Asp-36; that span reads GAGFTG. Substrate-binding residues include Arg-87 and Arg-93. NAD(+) is bound by residues Asn-100 and 123–125; that span reads LTN. Asn-125 provides a ligand contact to substrate. Position 149 is a phosphoserine (Ser-149). Arg-156 serves as a coordination point for substrate. His-180 serves as the catalytic Proton acceptor.

This sequence belongs to the LDH/MDH superfamily. MDH type 3 family.

The catalysed reaction is (S)-malate + NAD(+) = oxaloacetate + NADH + H(+). Its function is as follows. Catalyzes the reversible oxidation of malate to oxaloacetate. The polypeptide is Malate dehydrogenase (Halalkalibacterium halodurans (strain ATCC BAA-125 / DSM 18197 / FERM 7344 / JCM 9153 / C-125) (Bacillus halodurans)).